Consider the following 259-residue polypeptide: Putative aldolase class 2 protein PA3430 (259 aa).

Zn(2+) contacts are provided by histidine 113, histidine 115, and histidine 176.

This sequence belongs to the aldolase class II family. The cofactor is Zn(2+).

In Pseudomonas aeruginosa (strain ATCC 15692 / DSM 22644 / CIP 104116 / JCM 14847 / LMG 12228 / 1C / PRS 101 / PAO1), this protein is Putative aldolase class 2 protein PA3430.